Reading from the N-terminus, the 605-residue chain is MAGPGPTFPLHRLVWANRHRELEAALHSHQHDIEQEDPRGRTPLELAVSLGNLESVRVLLRHNANVGKENRQGWAVLQEAVSTGDPEMVQLVLQYRDYQRATQRLAGIPELLNKLRQAPDFYVEMKWEFTSWVPLVSKMCPSDVYRVWKRGESLRVDTSLLGFEHMTWQRGRRSFIFKGQEAGALVMEVDHDRQVVHVETLGLTLQEPETLLAAMRPSEEHVASRLTSPIVSTHLDTRNVAFERNKCGIWGWRSEKMETVSGYEAKVYSATNVELVTRTRTEHLSDQDKSRSKAGKTPFQSFLGMAQQHSSHTGAPVQQAASPTNPTAISPEEYFDPNFSLESRNIGRPIEMSSKVQRFKATLWLSEEHPLSLGDQVTPIIDLMAISNAHFAKLRDFITLRLPPGFPVKIEIPLFHVLNARITFSNLCGCDEPLSSVWVPAPSSAVAASGNPFPCEVDPTVFEVPNGYSVLGMERNEPLRDEDDDLLQFAIQQSLLEAGTEAEQVTVWEALTNTRPGARPPPQATVYEEQLQLERALQESLQLSTEPRGPGSPPRTPPAPGPPSFEEQLRLALELSSREQEERERRGQQEEEDLQRILQLSLTEH.

2 ANK repeats span residues 39–68 (RGRTPLELAVSLGNLESVRVLLRHNANVGK) and 72–101 (QGWAVLQEAVSTGDPEMVQLVLQYRDYQRA). A disordered region spans residues 306-333 (AQQHSSHTGAPVQQAASPTNPTAISPEE). Polar residues predominate over residues 319-328 (QAASPTNPTA). UIM domains lie at 482–501 (EDDDLLQFAIQQSLLEAGTE) and 528–547 (EEQLQLERALQESLQLSTEP). The disordered stretch occupies residues 541 to 605 (LQLSTEPRGP…RILQLSLTEH (65 aa)). The span at 550–563 (PGSPPRTPPAPGPP) shows a compositional bias: pro residues. Position 552 is a phosphoserine (Ser-552). Residue Thr-556 is modified to Phosphothreonine. Residues 564 to 575 (SFEEQLRLALEL) are compositionally biased toward low complexity. UIM domains follow at residues 564 to 583 (SFEEQLRLALELSSREQEER) and 589 to 605 (QEEEDLQRILQLSLTEH). Basic and acidic residues predominate over residues 576-589 (SSREQEERERRGQQ).

As to quaternary structure, interacts with EGFR (ubiquitinated); the interaction is direct and may regulate EGFR internalization.

The protein localises to the cell membrane. Its subcellular location is the late endosome. Functionally, ubiquitin-binding protein that specifically recognizes and binds 'Lys-63'-linked ubiquitin. Does not bind 'Lys-48'-linked ubiquitin. Positively regulates the internalization of ligand-activated EGFR by binding to the Ub moiety of ubiquitinated EGFR at the cell membrane. The protein is Ankyrin repeat domain-containing protein 13D (ANKRD13D) of Homo sapiens (Human).